Here is a 320-residue protein sequence, read N- to C-terminus: Reticulocalbin-2 (320 aa).

The signal sequence occupies residues 1–25 (MRLGPRPAALGLLLPLLLYAAVAGA). 2 EF-hand domains span residues 64–99 (EQQRRLQSIIKKIDSDSDGFLTENELSQWIQMSFKH) and 100–135 (YAMQEAKQQFVEYDKNSDGAVTWDEYNIQMYDRVID). Residues Asp77, Asp79, Asp81, Glu88, Asp113, Asn115, Asp117, and Glu124 each coordinate Ca(2+). The residue at position 140 (Thr140) is a Phosphothreonine. EF-hand domains lie at 150–185 (FRQLHLKDKKRFEKANQDSGPGLSLEEFIAFEHPEE), 189–224 (MTEFVIQEALEEHDKNGDGFVSLEEFLGDYRRDPTA), 230–265 (WILVEKDRFVNDYDKDNDGRLDPQELLSWVVPNNQG), and 266–301 (IAQEEALHLIDEMDLNSDKKLSEEEILENQDLFLTS). Asp167, Glu176, Asp202, Asn204, Asp206, Glu213, Asp243, Asp245, Asp247, Arg249, Glu254, Asp279, Asn281, Asp283, Lys285, and Glu290 together coordinate Ca(2+). A Prevents secretion from ER motif is present at residues 317–320 (HDEL).

Belongs to the CREC family.

The protein localises to the endoplasmic reticulum lumen. In terms of biological role, not known. Binds calcium. This chain is Reticulocalbin-2 (Rcn2), found in Mus musculus (Mouse).